The following is a 282-amino-acid chain: NADPH-dependent 7-cyano-7-deazaguanine reductase (282 aa).

88-90 (IES) provides a ligand contact to substrate. 90–91 (SK) is a binding site for NADPH. Catalysis depends on Cys190, which acts as the Thioimide intermediate. Catalysis depends on Asp197, which acts as the Proton donor. 229-230 (HE) contributes to the substrate binding site. Position 258–259 (258–259 (RG)) interacts with NADPH.

Belongs to the GTP cyclohydrolase I family. QueF type 2 subfamily. Homodimer.

It localises to the cytoplasm. It catalyses the reaction 7-aminomethyl-7-carbaguanine + 2 NADP(+) = 7-cyano-7-deazaguanine + 2 NADPH + 3 H(+). The protein operates within tRNA modification; tRNA-queuosine biosynthesis. Catalyzes the NADPH-dependent reduction of 7-cyano-7-deazaguanine (preQ0) to 7-aminomethyl-7-deazaguanine (preQ1). In Escherichia coli O81 (strain ED1a), this protein is NADPH-dependent 7-cyano-7-deazaguanine reductase.